The primary structure comprises 252 residues: Pantothenate synthetase (252 aa).

Residue 29-36 (MGNLHAGH) participates in ATP binding. H36 serves as the catalytic Proton donor. Q60 lines the (R)-pantoate pocket. Q60 provides a ligand contact to beta-alanine. 146–149 (GEKD) provides a ligand contact to ATP. (R)-pantoate is bound at residue Q152. ATP is bound by residues V175 and 183–186 (CSSR).

This sequence belongs to the pantothenate synthetase family. Homodimer.

The protein resides in the cytoplasm. The enzyme catalyses (R)-pantoate + beta-alanine + ATP = (R)-pantothenate + AMP + diphosphate + H(+). It functions in the pathway cofactor biosynthesis; (R)-pantothenate biosynthesis; (R)-pantothenate from (R)-pantoate and beta-alanine: step 1/1. Functionally, catalyzes the condensation of pantoate with beta-alanine in an ATP-dependent reaction via a pantoyl-adenylate intermediate. The polypeptide is Pantothenate synthetase (Legionella pneumophila (strain Lens)).